Reading from the N-terminus, the 735-residue chain is Disintegrin and metalloproteinase domain-containing protein 2 (735 aa).

The signal sequence occupies residues 1–15 (MLCLLLLLCGLASLG). Residues 16 to 176 (GPLKKYVENS…KIKSIKSSVR (161 aa)) constitute a propeptide that is removed on maturation. The Extracellular portion of the chain corresponds to 16-680 (GPLKKYVENS…EGAYHTKSRK (665 aa)). Residues asparagine 55, asparagine 220, and asparagine 288 are each glycosylated (N-linked (GlcNAc...) asparagine). The 198-residue stretch at 178-375 (HYIEMHIIVE…QVSQCLQNQP (198 aa)) folds into the Peptidase M12B domain. Cystine bridges form between cysteine 287/cysteine 370, cysteine 329/cysteine 354, cysteine 331/cysteine 336, and cysteine 442/cysteine 455. The N-linked (GlcNAc...) asparagine glycan is linked to asparagine 353. Residues 384-470 (NPVCGNNRVE…ACQEDLYVIN (87 aa)) form the Disintegrin domain. Residues asparagine 456 and asparagine 564 are each glycosylated (N-linked (GlcNAc...) asparagine). Residues 610–643 (LGYDCTPATCSDHGVCNNKRHCHCNPTYVPPNCE) enclose the EGF-like domain. Intrachain disulfides connect cysteine 614–cysteine 625, cysteine 619–cysteine 631, and cysteine 633–cysteine 642. The chain crosses the membrane as a helical span at residues 681-701 (WPFFLIIPFFVIFSVLVATVV). The Cytoplasmic portion of the chain corresponds to 702–735 (KVYYQKKKWKTEDYANDENIESESEPKSSKVSSK). The interval 716–735 (ANDENIESESEPKSSKVSSK) is disordered. Phosphoserine is present on serine 723.

As to quaternary structure, heterodimer with ADAM1/fertilin subunit alpha. In terms of processing, the signal and the metalloprotease domain are cleaved during the epididymal maturation of the spermatozoa. Expressed specifically in testis.

It is found in the membrane. Sperm surface membrane protein that may be involved in sperm-egg plasma membrane adhesion and fusion during fertilization. Could have a direct role in sperm-zona binding or migration of sperm from the uterus into the oviduct. Interactions with egg membrane could be mediated via binding between its disintegrin-like domain to one or more integrins receptors on the egg. This is a non catalytic metalloprotease-like protein. The polypeptide is Disintegrin and metalloproteinase domain-containing protein 2 (ADAM2) (Cavia porcellus (Guinea pig)).